We begin with the raw amino-acid sequence, 431 residues long: Gamma-glutamyl phosphate reductase (431 aa).

This sequence belongs to the gamma-glutamyl phosphate reductase family.

It is found in the cytoplasm. It catalyses the reaction L-glutamate 5-semialdehyde + phosphate + NADP(+) = L-glutamyl 5-phosphate + NADPH + H(+). The protein operates within amino-acid biosynthesis; L-proline biosynthesis; L-glutamate 5-semialdehyde from L-glutamate: step 2/2. Catalyzes the NADPH-dependent reduction of L-glutamate 5-phosphate into L-glutamate 5-semialdehyde and phosphate. The product spontaneously undergoes cyclization to form 1-pyrroline-5-carboxylate. This chain is Gamma-glutamyl phosphate reductase, found in Acaryochloris marina (strain MBIC 11017).